The primary structure comprises 777 residues: Santalene and bergamotene synthase, chloroplastic (777 aa).

The N-terminal 36 residues, 1–36, are a transit peptide targeting the chloroplast; it reads MIVGYRSTIITLSHPKLGNGKTISSNAIFQRSCRVR. 2 residues coordinate Mg(2+): D530 and D534. A DDXXD motif motif is present at residues 530–534; it reads DDQFD.

Belongs to the terpene synthase family. Tpse subfamily. Mg(2+) is required as a cofactor. It depends on Mn(2+) as a cofactor.

It is found in the plastid. Its subcellular location is the chloroplast. The enzyme catalyses (2Z,6Z)-farnesyl diphosphate = (+)-alpha-santalene + diphosphate. It carries out the reaction (2Z,6Z)-farnesyl diphosphate = (+)-endo-beta-bergamotene + diphosphate. The catalysed reaction is (2Z,6Z)-farnesyl diphosphate = (1S,5S,6S)-alpha-bergamotene + diphosphate. In terms of biological role, (2Z,6Z)-farnesyl diphosphate cyclizing enzyme. Produces (+)-alpha-santalene, (+)-endo-beta-bergamotene, (-)-endo-alpha-bergamotene, and at lower amounts, (-)exo-alpha-bergamotene and (+)-epi-beta-santalene. Not able to use geranyl diphosphate, E,E-farnesyl diphosphate or E,E,E-geranylgeranyl diphosphate as substrates, but able to use Neryl diphosphate to make the monoterpene terpineol. The polypeptide is Santalene and bergamotene synthase, chloroplastic (SBS) (Solanum habrochaites (Wild tomato)).